Consider the following 537-residue polypeptide: tRNA(His) guanylyltransferase 2 (537 aa).

Residues Asp-307, Gly-308, and Asp-354 each coordinate Mg(2+). GTP-binding positions include 307 to 312 (DGCHFH) and 353 to 354 (SD).

This sequence belongs to the tRNA(His) guanylyltransferase family. The cofactor is Mg(2+).

The protein localises to the nucleus. The protein resides in the nucleoplasm. The catalysed reaction is a 5'-end ribonucleotide-tRNA(His) + GTP + ATP + H2O = a 5'-end phospho-guanosine-ribonucleotide-tRNA(His) + AMP + 2 diphosphate + H(+). Its function is as follows. Adds a GMP to the 5'-end of tRNA(His) after transcription and RNase P cleavage. This Arabidopsis thaliana (Mouse-ear cress) protein is tRNA(His) guanylyltransferase 2 (THG2).